Consider the following 140-residue polypeptide: Transmembrane protein 107 (140 aa).

Transmembrane regions (helical) follow at residues 7–27 (LVPS…TLFW) and 53–73 (LVAA…GFLS). Asn79 carries N-linked (GlcNAc...) asparagine glycosylation. 2 helical membrane passes run 83-103 (SLLS…FVFE) and 113-133 (IFTF…IAVF).

In terms of assembly, part of the tectonic-like complex (also named B9 complex). Interacts with TMEM237, TMEM231, MKS1 and TMEM216.

The protein localises to the membrane. Its subcellular location is the cell projection. It localises to the cilium. Plays a role in cilia formation and embryonic patterning. Requires for normal Sonic hedgehog (Shh) signaling in the neural tube and acts in combination with GLI2 and GLI3 to pattern ventral and intermediate neuronal cell types. During ciliogenesis regulates the ciliary transition zone localization of some MKS complex proteins. The polypeptide is Transmembrane protein 107 (Mus musculus (Mouse)).